The following is a 2178-amino-acid chain: DNA-directed RNA polymerase subunit beta (2178 aa).

3 insert regions span residues 269-325 (SKKI…TPFV), 714-1508 (KRID…LFYN), and 1703-1900 (KGND…LQPM).

It belongs to the RNA polymerase beta chain family. In plastids the minimal PEP RNA polymerase catalytic core is composed of four subunits: alpha, beta, beta', and beta''. When a (nuclear-encoded) sigma factor is associated with the core the holoenzyme is formed, which can initiate transcription.

The protein resides in the plastid. It is found in the chloroplast. It carries out the reaction RNA(n) + a ribonucleoside 5'-triphosphate = RNA(n+1) + diphosphate. DNA-dependent RNA polymerase catalyzes the transcription of DNA into RNA using the four ribonucleoside triphosphates as substrates. This Tupiella akineta (Green alga) protein is DNA-directed RNA polymerase subunit beta.